Reading from the N-terminus, the 116-residue chain is UPF0134 protein MPN_038 (116 aa).

It belongs to the UPF0134 family.

This Mycoplasma pneumoniae (strain ATCC 29342 / M129 / Subtype 1) (Mycoplasmoides pneumoniae) protein is UPF0134 protein MPN_038.